The sequence spans 70 residues: MAKVDIHPIWYPDAKVYCDGQLIMTIGSTKPELHVDIWSGNHPFFTGSQRIIDTEGRVERFMRKYKMEKD.

The protein belongs to the bacterial ribosomal protein bL31 family. Type A subfamily. Part of the 50S ribosomal subunit.

It is found in the plastid. Its subcellular location is the chloroplast. Its function is as follows. Binds the 23S rRNA. This Porphyra purpurea (Red seaweed) protein is Large ribosomal subunit protein bL31c.